A 329-amino-acid chain; its full sequence is Carbonic anhydrase (329 aa).

The chloroplast transit peptide-like stretch occupies residues 1–108 (MSTASAFAIN…AAARIDQITA (108 aa)).

The protein belongs to the beta-class carbonic anhydrase family. In terms of assembly, homohexamer.

The protein localises to the cytoplasm. It catalyses the reaction hydrogencarbonate + H(+) = CO2 + H2O. Functionally, reversible hydration of carbon dioxide. In Flaveria pringlei, this protein is Carbonic anhydrase.